Consider the following 81-residue polypeptide: Exodeoxyribonuclease 7 small subunit (81 aa).

The tract at residues 61–81 (MNDSDQEVAFETPQGGTGDAD) is disordered.

Belongs to the XseB family. As to quaternary structure, heterooligomer composed of large and small subunits.

Its subcellular location is the cytoplasm. The catalysed reaction is Exonucleolytic cleavage in either 5'- to 3'- or 3'- to 5'-direction to yield nucleoside 5'-phosphates.. In terms of biological role, bidirectionally degrades single-stranded DNA into large acid-insoluble oligonucleotides, which are then degraded further into small acid-soluble oligonucleotides. This chain is Exodeoxyribonuclease 7 small subunit, found in Levilactobacillus brevis (strain ATCC 367 / BCRC 12310 / CIP 105137 / JCM 1170 / LMG 11437 / NCIMB 947 / NCTC 947) (Lactobacillus brevis).